The chain runs to 128 residues: Sulfurtransferase TusD (128 aa).

Cysteine 78 functions as the Cysteine persulfide intermediate in the catalytic mechanism.

Belongs to the DsrE/TusD family. Heterohexamer, formed by a dimer of trimers. The hexameric TusBCD complex contains 2 copies each of TusB, TusC and TusD. The TusBCD complex interacts with TusE.

The protein resides in the cytoplasm. Functionally, part of a sulfur-relay system required for 2-thiolation of 5-methylaminomethyl-2-thiouridine (mnm(5)s(2)U) at tRNA wobble positions. Accepts sulfur from TusA and transfers it in turn to TusE. The protein is Sulfurtransferase TusD of Escherichia coli (strain 55989 / EAEC).